The sequence spans 136 residues: uncharacterized protein (136 aa).

The protein localises to the mitochondrion. This is an uncharacterized protein from Arabidopsis thaliana (Mouse-ear cress).